A 292-amino-acid chain; its full sequence is NAD-dependent protein deacetylase sir-2.4 (292 aa).

Residues 31–292 (IEKLRTLYNH…DEVPIPLKIS (262 aa)) form the Deacetylase sirtuin-type domain. NAD(+) contacts are provided by residues 56 to 75 (GAGV…QGVW) and 116 to 119 (QNVD). H136 acts as the Proton acceptor in catalysis. Zn(2+) contacts are provided by C144, C147, C163, and C169. NAD(+)-binding positions include 216–218 (GTS), 242–244 (NYQ), and V260.

It belongs to the sirtuin family. Class IV subfamily. Requires Zn(2+) as cofactor.

The catalysed reaction is N(6)-acetyl-L-lysyl-[protein] + NAD(+) + H2O = 2''-O-acetyl-ADP-D-ribose + nicotinamide + L-lysyl-[protein]. Its function is as follows. NAD-dependent protein deacetylase. This chain is NAD-dependent protein deacetylase sir-2.4 (sir-2.4), found in Caenorhabditis elegans.